We begin with the raw amino-acid sequence, 241 residues long: Probable transcriptional regulatory protein Rmet_0785 (241 aa).

The protein belongs to the TACO1 family.

It is found in the cytoplasm. The protein is Probable transcriptional regulatory protein Rmet_0785 of Cupriavidus metallidurans (strain ATCC 43123 / DSM 2839 / NBRC 102507 / CH34) (Ralstonia metallidurans).